The primary structure comprises 552 residues: MSIFSARLASSVARNLPKAANQVACKAAYPAASLAARKLHVASTQRSAEISNILEERILGVAPKADLEETGRVLSIGDGIARVYGLNNIQADEMVEFSSGLKGMALNLEPDNVGVVVFGNDKLIKQGDIVKRTGAIVDVPVGDELLGRVVDALGNAIDGKGAINTKDRFRVGIKAPGIIPRVSVREPMQTGIKAVDSLVPIGRGQRELIIGDRQTGKTALAIDTIINQKRFNEAQDESKKLYCIYVAIGQKRSTVAQIVKRLTDSGAMGYSVIVSATASDAAPLQYLAPYSGCAMGEYFRDKGKHALIIYDDLSKQAVAYRQMSLLLRRPPGREAYPGDVFYLHSRLLERAAKMSPAMGGGSLTALPVIETQAGDVSAYIPTNVISITDGQIFLETELFYKGIRPAINVGLSVSRVGSAAQTKAMKQVAGSMKLELAQYREVAAFAQFGSDLDAATQQLLNRGVRLTELLKQGQYVPMAIEDQVAVIYCGVRGHLDKMDPAKITKFEKEFLQHIKTSEQALLDTIAKDGAISEASDAKLKDIVAKFMSTFQG.

The N-terminal 47 residues, methionine 1–serine 47, are a transit peptide targeting the mitochondrion. Glycine 211–threonine 218 contributes to the ATP binding site.

This sequence belongs to the ATPase alpha/beta chains family. In terms of assembly, F-type ATPases have 2 components, CF(1) - the catalytic core - and CF(0) - the membrane proton channel. CF(1) has five subunits: alpha(3), beta(3), gamma(1), delta(1), epsilon(1). CF(0) has three main subunits: a, b and c.

Its subcellular location is the mitochondrion inner membrane. Functionally, mitochondrial membrane ATP synthase (F(1)F(0) ATP synthase or Complex V) produces ATP from ADP in the presence of a proton gradient across the membrane which is generated by electron transport complexes of the respiratory chain. F-type ATPases consist of two structural domains, F(1) - containing the extramembraneous catalytic core, and F(0) - containing the membrane proton channel, linked together by a central stalk and a peripheral stalk. During catalysis, ATP synthesis in the catalytic domain of F(1) is coupled via a rotary mechanism of the central stalk subunits to proton translocation. Subunits alpha and beta form the catalytic core in F(1). Rotation of the central stalk against the surrounding alpha(3)beta(3) subunits leads to hydrolysis of ATP in three separate catalytic sites on the beta subunits. Subunit alpha does not bear the catalytic high-affinity ATP-binding sites. The sequence is that of ATP synthase subunit alpha, mitochondrial (blw) from Drosophila melanogaster (Fruit fly).